A 363-amino-acid chain; its full sequence is UDP-N-acetylglucosamine--N-acetylmuramyl-(pentapeptide) pyrophosphoryl-undecaprenol N-acetylglucosamine transferase (363 aa).

UDP-N-acetyl-alpha-D-glucosamine is bound by residues Thr14–Gly16, Asn122, Arg163, Ser190, and Gln285.

It belongs to the glycosyltransferase 28 family. MurG subfamily.

It localises to the cell inner membrane. It catalyses the reaction di-trans,octa-cis-undecaprenyl diphospho-N-acetyl-alpha-D-muramoyl-L-alanyl-D-glutamyl-meso-2,6-diaminopimeloyl-D-alanyl-D-alanine + UDP-N-acetyl-alpha-D-glucosamine = di-trans,octa-cis-undecaprenyl diphospho-[N-acetyl-alpha-D-glucosaminyl-(1-&gt;4)]-N-acetyl-alpha-D-muramoyl-L-alanyl-D-glutamyl-meso-2,6-diaminopimeloyl-D-alanyl-D-alanine + UDP + H(+). It participates in cell wall biogenesis; peptidoglycan biosynthesis. Functionally, cell wall formation. Catalyzes the transfer of a GlcNAc subunit on undecaprenyl-pyrophosphoryl-MurNAc-pentapeptide (lipid intermediate I) to form undecaprenyl-pyrophosphoryl-MurNAc-(pentapeptide)GlcNAc (lipid intermediate II). The polypeptide is UDP-N-acetylglucosamine--N-acetylmuramyl-(pentapeptide) pyrophosphoryl-undecaprenol N-acetylglucosamine transferase (Prochlorococcus marinus (strain MIT 9301)).